Reading from the N-terminus, the 272-residue chain is Shikimate dehydrogenase (NADP(+)) (272 aa).

Shikimate contacts are provided by residues 14–16 (SKS) and threonine 61. Lysine 65 serves as the catalytic Proton acceptor. Residue glutamate 77 coordinates NADP(+). Shikimate-binding residues include asparagine 86 and aspartate 102. NADP(+) contacts are provided by residues 126–130 (GAGGA), 149–154 (NRTVSR), and methionine 213. Tyrosine 215 contributes to the shikimate binding site. Glycine 237 serves as a coordination point for NADP(+).

Belongs to the shikimate dehydrogenase family. As to quaternary structure, homodimer.

It carries out the reaction shikimate + NADP(+) = 3-dehydroshikimate + NADPH + H(+). Its pathway is metabolic intermediate biosynthesis; chorismate biosynthesis; chorismate from D-erythrose 4-phosphate and phosphoenolpyruvate: step 4/7. Its function is as follows. Involved in the biosynthesis of the chorismate, which leads to the biosynthesis of aromatic amino acids. Catalyzes the reversible NADPH linked reduction of 3-dehydroshikimate (DHSA) to yield shikimate (SA). The polypeptide is Shikimate dehydrogenase (NADP(+)) (Escherichia coli (strain K12 / MC4100 / BW2952)).